The sequence spans 588 residues: MPLDNKVQLNENGKEVNNNNNNDEDLKIQDNHNNKEPFFNRSELVRLLIQSLNSLGYDKSAEFLEKDSGISLQSKEINQFSECVVSGDWNKVEELLPFLKLNEFDTNNVKFLVYSQKFLEYLENHKIKEALECLRLEITPYTKDTSRLQVLTSLIMTSNSSETKKQIKQRSSRVNLLDDIRKYVNPNIMLPENRLEQLIKQSIQYQMGKCLYHNTSEQFINLFKDHTCDKSQMPLDVLFTLKDKHRDEIWFITFSHDGQRLASSSKDNTIIIWDMSTIYLDQPTEPKVMFILLGHTKEVSHLSWSPNDKYLLSASNDSTVKLWNTNDGTLLKTFTKHSDAVTCCGWHPDNKRFVSGGNDKNIYLWSIENLDLTNSNNNNNNHNNNNSNINGNSINGSNNNGNNNNNISPIKSWACARVNDLSIHKDGKQLIIICQEKKLRIYDLENEKTPEVVLMETDAITSMELSNDCNFALVNTSNQEIHLWDLEKQIIVQKYRGHKQGRFVIRSCFGGVDQAFVLSGSEDSTIYIWHRSSGILLETLSRHSGTVNTVCWSPCNPFIFCSASDDQTIKVWSRSNNHNSFINNLTNK.

The disordered stretch occupies residues Met1 to His32. Positions Asn40–Leu72 constitute a LisH domain. One can recognise a CTLH domain in the interval Gln73 to Glu129. WD repeat units lie at residues Lys244–Pro283, Gly294–Thr333, and Lys336–Ser375. The interval Asn376–Asn403 is disordered. 4 WD repeats span residues Trp413 to Val452, Met455 to Lys494, Lys499 to Thr539, and Arg542 to Ile582.

The polypeptide is WD repeat-containing protein DDB_G0349043 (Dictyostelium discoideum (Social amoeba)).